The following is a 243-amino-acid chain: Carboxy-S-adenosyl-L-methionine synthase (243 aa).

Residues Tyr-40, 65-67 (GCS), 90-91 (DN), 118-119 (DI), Asn-133, and Arg-200 each bind S-adenosyl-L-methionine.

It belongs to the class I-like SAM-binding methyltransferase superfamily. Cx-SAM synthase family. Homodimer.

The catalysed reaction is prephenate + S-adenosyl-L-methionine = carboxy-S-adenosyl-L-methionine + 3-phenylpyruvate + H2O. Its function is as follows. Catalyzes the conversion of S-adenosyl-L-methionine (SAM) to carboxy-S-adenosyl-L-methionine (Cx-SAM). In Shewanella baltica (strain OS223), this protein is Carboxy-S-adenosyl-L-methionine synthase.